The following is a 287-amino-acid chain: Ribonuclease HII (287 aa).

The RNase H type-2 domain maps to 61 to 287 (ALQIGVDEAG…FAPVRKALES (227 aa)). A divalent metal cation contacts are provided by Asp67, Glu68, and Asp186.

The protein belongs to the RNase HII family. Mn(2+) is required as a cofactor. The cofactor is Mg(2+).

The protein resides in the cytoplasm. The enzyme catalyses Endonucleolytic cleavage to 5'-phosphomonoester.. Its function is as follows. Endonuclease that specifically degrades the RNA of RNA-DNA hybrids. The sequence is that of Ribonuclease HII from Psychrobacter arcticus (strain DSM 17307 / VKM B-2377 / 273-4).